A 346-amino-acid chain; its full sequence is Melanoma-associated antigen B3 (346 aa).

The interval 1–35 is disordered; sequence MPRGQKSTLHAREKRQQTRGQTQDHQGAQITATNK. Polar residues predominate over residues 18-33; sequence TRGQTQDHQGAQITAT. The 200-residue stretch at 111-310 folds into the MAGE domain; it reads LIMKTNMLVQ…SAFQFWYEEA (200 aa).

Expressed in testis.

The polypeptide is Melanoma-associated antigen B3 (MAGEB3) (Homo sapiens (Human)).